A 309-amino-acid chain; its full sequence is Probable manganese-dependent inorganic pyrophosphatase (309 aa).

Residues His9, Asp13, Asp15, Asp75, His97, and Asp149 each coordinate Mn(2+).

The protein belongs to the PPase class C family. The cofactor is Mn(2+).

It is found in the cytoplasm. It catalyses the reaction diphosphate + H2O = 2 phosphate + H(+). The sequence is that of Probable manganese-dependent inorganic pyrophosphatase from Bacillus licheniformis (strain ATCC 14580 / DSM 13 / JCM 2505 / CCUG 7422 / NBRC 12200 / NCIMB 9375 / NCTC 10341 / NRRL NRS-1264 / Gibson 46).